A 116-amino-acid polypeptide reads, in one-letter code: T cell receptor alpha variable 38-2/delta variable 8 (116 aa).

The signal sequence occupies residues 1–21 (MACPGFLWALVISTCLEFSMA). The region spanning 22 to 116 (QTVTQSQPEM…AAMYFCAYRS (95 aa)) is the Ig-like domain. The cysteines at positions 43 and 112 are disulfide-linked. A glycan (N-linked (GlcNAc...) asparagine) is linked at N78.

In terms of assembly, alpha-beta TR is a heterodimer composed of an alpha and beta chain; disulfide-linked. The alpha-beta TR is associated with the transmembrane signaling CD3 coreceptor proteins to form the TR-CD3 (TcR or TCR). The assembly of alpha-beta TR heterodimers with CD3 occurs in the endoplasmic reticulum where a single alpha-beta TR heterodimer associates with one CD3D-CD3E heterodimer, one CD3G-CD3E heterodimer and one CD247 homodimer forming a stable octameric structure. CD3D-CD3E and CD3G-CD3E heterodimers preferentially associate with TR alpha and TR beta chains, respectively. The association of the CD247 homodimer is the last step of TcR assembly in the endoplasmic reticulum and is required for transport to the cell surface.

It is found in the cell membrane. Its function is as follows. V region of the variable domain of T cell receptor (TR) alpha chain that participates in the antigen recognition. Alpha-beta T cell receptors are antigen specific receptors which are essential to the immune response and are present on the cell surface of T lymphocytes. Recognize peptide-major histocompatibility (MH) (pMH) complexes that are displayed by antigen presenting cells (APC), a prerequisite for efficient T cell adaptive immunity against pathogens. Binding of alpha-beta TR to pMH complex initiates TR-CD3 clustering on the cell surface and intracellular activation of LCK that phosphorylates the ITAM motifs of CD3G, CD3D, CD3E and CD247 enabling the recruitment of ZAP70. In turn ZAP70 phosphorylates LAT, which recruits numerous signaling molecules to form the LAT signalosome. The LAT signalosome propagates signal branching to three major signaling pathways, the calcium, the mitogen-activated protein kinase (MAPK) kinase and the nuclear factor NF-kappa-B (NF-kB) pathways, leading to the mobilization of transcription factors that are critical for gene expression and essential for T cell growth and differentiation. The T cell repertoire is generated in the thymus, by V-(D)-J rearrangement. This repertoire is then shaped by intrathymic selection events to generate a peripheral T cell pool of self-MH restricted, non-autoaggressive T cells. Post-thymic interaction of alpha-beta TR with the pMH complexes shapes TR structural and functional avidity. In Homo sapiens (Human), this protein is T cell receptor alpha variable 38-2/delta variable 8.